The sequence spans 301 residues: Ribosomal protein L11 methyltransferase (301 aa).

Thr130, Gly151, Asp172, and Asn239 together coordinate S-adenosyl-L-methionine.

This sequence belongs to the methyltransferase superfamily. PrmA family.

Its subcellular location is the cytoplasm. The enzyme catalyses L-lysyl-[protein] + 3 S-adenosyl-L-methionine = N(6),N(6),N(6)-trimethyl-L-lysyl-[protein] + 3 S-adenosyl-L-homocysteine + 3 H(+). In terms of biological role, methylates ribosomal protein L11. The polypeptide is Ribosomal protein L11 methyltransferase (Campylobacter hominis (strain ATCC BAA-381 / DSM 21671 / CCUG 45161 / LMG 19568 / NCTC 13146 / CH001A)).